The following is a 316-amino-acid chain: tRNA-cytidine(32) 2-sulfurtransferase (316 aa).

Positions 1–31 (MGAVIDDSMPGPGADATGTGPSDARTERETR) are disordered. Residues 10-21 (PGPGADATGTGP) are compositionally biased toward low complexity. Residues 62 to 67 (SGGKDS) carry the PP-loop motif motif. C137, C140, and C228 together coordinate [4Fe-4S] cluster.

It belongs to the TtcA family. As to quaternary structure, homodimer. It depends on Mg(2+) as a cofactor. Requires [4Fe-4S] cluster as cofactor.

The protein localises to the cytoplasm. The catalysed reaction is cytidine(32) in tRNA + S-sulfanyl-L-cysteinyl-[cysteine desulfurase] + AH2 + ATP = 2-thiocytidine(32) in tRNA + L-cysteinyl-[cysteine desulfurase] + A + AMP + diphosphate + H(+). It participates in tRNA modification. Its function is as follows. Catalyzes the ATP-dependent 2-thiolation of cytidine in position 32 of tRNA, to form 2-thiocytidine (s(2)C32). The sulfur atoms are provided by the cysteine/cysteine desulfurase (IscS) system. The chain is tRNA-cytidine(32) 2-sulfurtransferase from Verminephrobacter eiseniae (strain EF01-2).